The chain runs to 225 residues: N-(5'-phosphoribosyl)anthranilate isomerase (225 aa).

The protein belongs to the TrpF family.

It catalyses the reaction N-(5-phospho-beta-D-ribosyl)anthranilate = 1-(2-carboxyphenylamino)-1-deoxy-D-ribulose 5-phosphate. It functions in the pathway amino-acid biosynthesis; L-tryptophan biosynthesis; L-tryptophan from chorismate: step 3/5. In Nitrobacter hamburgensis (strain DSM 10229 / NCIMB 13809 / X14), this protein is N-(5'-phosphoribosyl)anthranilate isomerase.